Reading from the N-terminus, the 115-residue chain is Large ribosomal subunit protein uL22 (115 aa).

The protein belongs to the universal ribosomal protein uL22 family. Part of the 50S ribosomal subunit.

Its function is as follows. This protein binds specifically to 23S rRNA; its binding is stimulated by other ribosomal proteins, e.g. L4, L17, and L20. It is important during the early stages of 50S assembly. It makes multiple contacts with different domains of the 23S rRNA in the assembled 50S subunit and ribosome. Functionally, the globular domain of the protein is located near the polypeptide exit tunnel on the outside of the subunit, while an extended beta-hairpin is found that lines the wall of the exit tunnel in the center of the 70S ribosome. The polypeptide is Large ribosomal subunit protein uL22 (Streptomyces avermitilis (strain ATCC 31267 / DSM 46492 / JCM 5070 / NBRC 14893 / NCIMB 12804 / NRRL 8165 / MA-4680)).